The sequence spans 140 residues: MIQKLFLLVRSLVILSIMLYLGNLIAYYIPSGVPGSIWGLLLLFLGLTTRVIHLNWIYLGASLLIRFMAVLFVPVSVGIIKYSDLLIEQINILLVPNIVSTCVTLLVIGFLGHYLYQMQSFTHKRKKVIKRRENQVKQAN.

Helical transmembrane passes span 1–21 (MIQK…MLYL), 33–52 (VPGS…TRVI), 60–80 (GASL…VGII), and 92–112 (ILLV…GFLG).

The protein belongs to the UPF0299 family.

Its subcellular location is the cell inner membrane. This Haemophilus influenzae (strain PittGG) protein is UPF0299 membrane protein CGSHiGG_01475.